A 147-amino-acid polypeptide reads, in one-letter code: Large ribosomal subunit protein bL9 (147 aa).

This sequence belongs to the bacterial ribosomal protein bL9 family.

In terms of biological role, binds to the 23S rRNA. In Campylobacter jejuni subsp. jejuni serotype O:6 (strain 81116 / NCTC 11828), this protein is Large ribosomal subunit protein bL9.